We begin with the raw amino-acid sequence, 274 residues long: NH(3)-dependent NAD(+) synthetase (274 aa).

46-53 (GISGGQDS) contributes to the ATP binding site. Asp52 is a binding site for Mg(2+). Arg140 lines the deamido-NAD(+) pocket. Thr160 contacts ATP. Position 165 (Glu165) interacts with Mg(2+). Deamido-NAD(+) is bound by residues Lys173 and Asp180. ATP contacts are provided by Lys189 and Thr211. Residue 260–261 (HK) participates in deamido-NAD(+) binding.

This sequence belongs to the NAD synthetase family. In terms of assembly, homodimer.

It catalyses the reaction deamido-NAD(+) + NH4(+) + ATP = AMP + diphosphate + NAD(+) + H(+). Its pathway is cofactor biosynthesis; NAD(+) biosynthesis; NAD(+) from deamido-NAD(+) (ammonia route): step 1/1. Functionally, catalyzes the ATP-dependent amidation of deamido-NAD to form NAD. Uses ammonia as a nitrogen source. This chain is NH(3)-dependent NAD(+) synthetase, found in Streptococcus pneumoniae (strain Hungary19A-6).